The primary structure comprises 249 residues: Ubiquinone/menaquinone biosynthesis C-methyltransferase UbiE (249 aa).

Residues Thr-74, Asp-93, and 121-122 (DA) each bind S-adenosyl-L-methionine.

Belongs to the class I-like SAM-binding methyltransferase superfamily. MenG/UbiE family.

The enzyme catalyses a 2-demethylmenaquinol + S-adenosyl-L-methionine = a menaquinol + S-adenosyl-L-homocysteine + H(+). The catalysed reaction is a 2-methoxy-6-(all-trans-polyprenyl)benzene-1,4-diol + S-adenosyl-L-methionine = a 5-methoxy-2-methyl-3-(all-trans-polyprenyl)benzene-1,4-diol + S-adenosyl-L-homocysteine + H(+). Its pathway is quinol/quinone metabolism; menaquinone biosynthesis; menaquinol from 1,4-dihydroxy-2-naphthoate: step 2/2. The protein operates within cofactor biosynthesis; ubiquinone biosynthesis. Functionally, methyltransferase required for the conversion of demethylmenaquinol (DMKH2) to menaquinol (MKH2) and the conversion of 2-polyprenyl-6-methoxy-1,4-benzoquinol (DDMQH2) to 2-polyprenyl-3-methyl-6-methoxy-1,4-benzoquinol (DMQH2). This chain is Ubiquinone/menaquinone biosynthesis C-methyltransferase UbiE, found in Acidiphilium cryptum (strain JF-5).